A 302-amino-acid polypeptide reads, in one-letter code: Zinc import ATP-binding protein ZnuC (302 aa).

The ABC transporter domain occupies 13–228; sequence VSLANAGVRR…PEYLKLFGRR (216 aa). An ATP-binding site is contributed by 45–52; sequence GPNGSGKS.

It belongs to the ABC transporter superfamily. Zinc importer (TC 3.A.1.15.5) family. The complex is composed of two ATP-binding proteins (ZnuC), two transmembrane proteins (ZnuB) and a solute-binding protein (ZnuA).

Its subcellular location is the cell inner membrane. The catalysed reaction is Zn(2+)(out) + ATP(in) + H2O(in) = Zn(2+)(in) + ADP(in) + phosphate(in) + H(+)(in). Functionally, part of the ABC transporter complex ZnuABC involved in zinc import. Responsible for energy coupling to the transport system. This Rhizobium meliloti (strain 1021) (Ensifer meliloti) protein is Zinc import ATP-binding protein ZnuC.